We begin with the raw amino-acid sequence, 66 residues long: Large ribosomal subunit protein uL29 (66 aa).

It belongs to the universal ribosomal protein uL29 family.

This chain is Large ribosomal subunit protein uL29, found in Geobacillus kaustophilus (strain HTA426).